We begin with the raw amino-acid sequence, 460 residues long: MVTLSNTSMVGGRDLPSTGFAWWSGNARLINLSGKLLGAHVAHAGLIVFWAGAMTLFEVAHFIPEKPMYEQGLILLPHIATLGWGVGPAGEVTDIFPFFVVGVLHLISSAVLGLGGIYHALRGPEVLEEYSSFFGYDWKDKNQMTNIIGYHLILLGCGALLLVFKAMFFGGVYDTWAPGGGDVRVITNPTLNPAIIFGYLLKAPFGGEGWIISVNNMEDIIGGHIWIGLICISGGIWHILTKPFGWARRALIWSGEAYLSYSLGALSLMGFIASVFVWFNNTAYPSEFYGPTGMEASQSQAFTFLVRDQRLGANIASAQGPTGLGKYLMRSPSGEIIFGGETMRFWDFRGPWLEPLRGPNGLDLDKLRNDIQPWQVRRAAEYMTHAPLGSLNSVGGVITDVNSFNYVSPRAWLATSHFVLGFFFLVGHLWHAGRARAAAAGFEKGIDRETEPTLFMPDLD.

At 1–35 the chain is on the cytoplasmic side; it reads MVTLSNTSMVGGRDLPSTGFAWWSGNARLINLSGK. A helical transmembrane segment spans residues 36 to 58; it reads LLGAHVAHAGLIVFWAGAMTLFE. The Lumenal, thylakoid portion of the chain corresponds to 59–98; the sequence is VAHFIPEKPMYEQGLILLPHIATLGWGVGPAGEVTDIFPF. Residues 99–121 traverse the membrane as a helical segment; sequence FVVGVLHLISSAVLGLGGIYHAL. Over 122-142 the chain is Cytoplasmic; it reads RGPEVLEEYSSFFGYDWKDKN. Residues 143 to 165 traverse the membrane as a helical segment; the sequence is QMTNIIGYHLILLGCGALLLVFK. The Lumenal, thylakoid portion of the chain corresponds to 166–220; it reads AMFFGGVYDTWAPGGGDVRVITNPTLNPAIIFGYLLKAPFGGEGWIISVNNMEDI. Residues 221–240 traverse the membrane as a helical segment; sequence IGGHIWIGLICISGGIWHIL. Residues 241-255 are Cytoplasmic-facing; sequence TKPFGWARRALIWSG. A helical transmembrane segment spans residues 256-276; that stretch reads EAYLSYSLGALSLMGFIASVF. The Lumenal, thylakoid portion of the chain corresponds to 277–411; it reads VWFNNTAYPS…NSFNYVSPRA (135 aa). [CaMn4O5] cluster is bound by residues E341 and R344. A helical transmembrane segment spans residues 412–436; the sequence is WLATSHFVLGFFFLVGHLWHAGRAR. The Cytoplasmic segment spans residues 437 to 460; it reads AAAAGFEKGIDRETEPTLFMPDLD.

Belongs to the PsbB/PsbC family. PsbC subfamily. PSII is composed of 1 copy each of membrane proteins PsbA, PsbB, PsbC, PsbD, PsbE, PsbF, PsbH, PsbI, PsbJ, PsbK, PsbL, PsbM, PsbT, PsbX, PsbY, PsbZ, Psb30/Ycf12, peripheral proteins PsbO, CyanoQ (PsbQ), PsbU, PsbV and a large number of cofactors. It forms dimeric complexes. It depends on Binds multiple chlorophylls and provides some of the ligands for the Ca-4Mn-5O cluster of the oxygen-evolving complex. It may also provide a ligand for a Cl- that is required for oxygen evolution. PSII binds additional chlorophylls, carotenoids and specific lipids. as a cofactor.

The protein localises to the cellular thylakoid membrane. Functionally, one of the components of the core complex of photosystem II (PSII). PSII binds chlorophyll and helps catalyze the primary light-induced photochemical processes of PSII. PSII is a light-driven water:plastoquinone oxidoreductase, using light energy to abstract electrons from H(2)O, generating O(2) and a proton gradient subsequently used for ATP formation. Required for correct assembly of PSII. The chain is Photosystem II CP43 reaction center protein from Synechocystis sp. (strain ATCC 27184 / PCC 6803 / Kazusa).